The sequence spans 562 residues: Urocanate hydratase (562 aa).

NAD(+) is bound by residues 52-53 (GG), Gln130, 176-178 (GMG), Glu196, Arg201, 242-243 (NA), 263-267 (QTSAH), 273-274 (YL), and Tyr322. Cys410 is an active-site residue. Residue Gly492 coordinates NAD(+).

It belongs to the urocanase family. Requires NAD(+) as cofactor.

The protein resides in the cytoplasm. It catalyses the reaction 4-imidazolone-5-propanoate = trans-urocanate + H2O. It participates in amino-acid degradation; L-histidine degradation into L-glutamate; N-formimidoyl-L-glutamate from L-histidine: step 2/3. Catalyzes the conversion of urocanate to 4-imidazolone-5-propionate. This Klebsiella pneumoniae (strain 342) protein is Urocanate hydratase.